The primary structure comprises 88 residues: Small ribosomal subunit protein bS20 (88 aa).

Disordered stretches follow at residues 1-25 (MANS…KARR) and 61-88 (GVTK…ALGA).

It belongs to the bacterial ribosomal protein bS20 family.

Its function is as follows. Binds directly to 16S ribosomal RNA. In Jannaschia sp. (strain CCS1), this protein is Small ribosomal subunit protein bS20.